A 425-amino-acid chain; its full sequence is RNA polymerase sigma factor SigA (425 aa).

Positions 193 to 263 (MVQSNLRLVV…TRAIADQSRT (71 aa)) are sigma-70 factor domain-2. Residues 217–220 (DLIQ) carry the Interaction with polymerase core subunit RpoC motif. Residues 272-347 (ETISRIKKTT…EADGETPEDE (76 aa)) form a sigma-70 factor domain-3 region. The interval 360-413 (VLDTLSPRERDVLRLRYGLDDGRMKTLEEIGQIFNVTRERIRQIEAKALRKLRH) is sigma-70 factor domain-4. The H-T-H motif DNA-binding region spans 386-405 (LEEIGQIFNVTRERIRQIEA).

Belongs to the sigma-70 factor family. RpoD/SigA subfamily. As to quaternary structure, interacts transiently with the RNA polymerase catalytic core.

Its subcellular location is the cytoplasm. Sigma factors are initiation factors that promote the attachment of RNA polymerase to specific initiation sites and are then released. This sigma factor is the primary sigma factor during exponential growth. The protein is RNA polymerase sigma factor SigA of Synechocystis sp. (strain ATCC 27184 / PCC 6803 / Kazusa).